The sequence spans 753 residues: 5-methyltetrahydropteroyltriglutamate--homocysteine methyltransferase (753 aa).

5-methyltetrahydropteroyltri-L-glutamate contacts are provided by residues 17–20 and Lys117; that span reads RELK. Residues 431-433 and Glu484 each bind L-homocysteine; that span reads IGS. Residues 431 to 433 and Glu484 contribute to the L-methionine site; that span reads IGS. 5-methyltetrahydropteroyltri-L-glutamate-binding positions include 515 to 516 and Trp561; that span reads RC. Asp599 lines the L-homocysteine pocket. Residue Asp599 participates in L-methionine binding. Glu605 contacts 5-methyltetrahydropteroyltri-L-glutamate. The Zn(2+) site is built by His641, Cys643, and Glu665. Residue His694 is the Proton donor of the active site. Position 726 (Cys726) interacts with Zn(2+).

Belongs to the vitamin-B12 independent methionine synthase family. Requires Zn(2+) as cofactor.

The enzyme catalyses 5-methyltetrahydropteroyltri-L-glutamate + L-homocysteine = tetrahydropteroyltri-L-glutamate + L-methionine. The protein operates within amino-acid biosynthesis; L-methionine biosynthesis via de novo pathway; L-methionine from L-homocysteine (MetE route): step 1/1. In terms of biological role, catalyzes the transfer of a methyl group from 5-methyltetrahydrofolate to homocysteine resulting in methionine formation. This is 5-methyltetrahydropteroyltriglutamate--homocysteine methyltransferase from Escherichia coli (strain ATCC 8739 / DSM 1576 / NBRC 3972 / NCIMB 8545 / WDCM 00012 / Crooks).